The primary structure comprises 108 residues: Large ribosomal subunit protein uL23 (108 aa).

It belongs to the universal ribosomal protein uL23 family. Part of the 50S ribosomal subunit. Contacts protein L29, and trigger factor when it is bound to the ribosome.

Functionally, one of the early assembly proteins it binds 23S rRNA. One of the proteins that surrounds the polypeptide exit tunnel on the outside of the ribosome. Forms the main docking site for trigger factor binding to the ribosome. In Polaromonas sp. (strain JS666 / ATCC BAA-500), this protein is Large ribosomal subunit protein uL23.